We begin with the raw amino-acid sequence, 361 residues long: Ataxin-3 (361 aa).

M1 participates in a covalent cross-link: Peptide (Met-Gly) (interchain with G-Cter in ubiquitin). One can recognise a Josephin domain in the interval 1-180; sequence MESIFHEKQE…DCEADQLLQM (180 aa). The active-site Nucleophile is the C14. The active-site Proton acceptor is the H119. N134 is an active-site residue. K200 is covalently cross-linked (Glycyl lysine isopeptide (Lys-Gly) (interchain with G-Cter in ubiquitin)). Phosphoserine is present on S219. 2 UIM domains span residues 224–243 and 244–263; these read EDEE…IDME and DEEA…SSRN. The span at 258–278 shows a compositional bias: polar residues; it reads QGSSRNISQDMTQTSGTNLTS. The segment at 258-338 is disordered; the sequence is QGSSRNISQD…DLGDAMSEED (81 aa). Phosphoserine occurs at positions 265 and 272. Positions 279–293 are enriched in basic and acidic residues; it reads EELRKRREAYFEKQQ. The segment covering 294-305 has biased composition (low complexity); sequence QKQQQQQQQQQQ. Polar residues predominate over residues 306–325; the sequence is GDLSGQSSHPCERPATSSGA. Phosphoserine is present on S328. Positions 331–349 constitute a UIM 3 domain; the sequence is GDAMSEEDMLQAAVTMSLE.

In terms of assembly, interacts with STUB1/CHIP (when monoubiquitinated). Interacts with DNA repair proteins RAD23A and RAD23B. Interacts with BECN1 (via its poly-Gln domain). Interacts with PRKN, UBR2, VCP and tubulin. Short isoform 1 interacts with CASP7. Monoubiquitinated N-terminally by UBE2W, possibly leading to activate the deubiquitinating enzyme activity. As to expression, ubiquitous.

The protein resides in the nucleus matrix. It is found in the nucleus. Its subcellular location is the lysosome membrane. It carries out the reaction Thiol-dependent hydrolysis of ester, thioester, amide, peptide and isopeptide bonds formed by the C-terminal Gly of ubiquitin (a 76-residue protein attached to proteins as an intracellular targeting signal).. Its function is as follows. Deubiquitinating enzyme involved in protein homeostasis maintenance, transcription, cytoskeleton regulation, myogenesis and degradation of misfolded chaperone substrates. Binds long polyubiquitin chains and trims them, while it has weak or no activity against chains of 4 or less ubiquitins. Involved in degradation of misfolded chaperone substrates via its interaction with STUB1/CHIP: recruited to monoubiquitinated STUB1/CHIP, and restricts the length of ubiquitin chain attached to STUB1/CHIP substrates and preventing further chain extension. Interacts with key regulators of transcription and represses transcription: acts as a histone-binding protein that regulates transcription. Acts as a negative regulator of mTORC1 signaling in response to amino acid deprivation by mediating deubiquitination of RHEB, thereby promoting RHEB inactivation by the TSC-TBC complex. Regulates autophagy via the deubiquitination of 'Lys-402' of BECN1 leading to the stabilization of BECN1. The chain is Ataxin-3 from Homo sapiens (Human).